A 388-amino-acid chain; its full sequence is tRNA (guanine-N(7)-)-methyltransferase non-catalytic subunit (388 aa).

4 WD repeats span residues 58-102 (VEKR…KGDI), 112-151 (VVPK…AIEM), 153-194 (GAIS…DSFF), and 196-234 (GHTE…APRR). The interval 365–388 (EKKKRRLNEDINGDDGEGPGPSNS) is disordered.

Belongs to the WD repeat TRM82 family. Forms a heterodimer with the catalytic subunit.

The protein resides in the nucleus. It participates in tRNA modification; N(7)-methylguanine-tRNA biosynthesis. Functionally, required for the formation of N(7)-methylguanine at position 46 (m7G46) in tRNA. In the complex, it is required to stabilize and induce conformational changes of the catalytic subunit. The polypeptide is tRNA (guanine-N(7)-)-methyltransferase non-catalytic subunit (Caenorhabditis elegans).